Consider the following 275-residue polypeptide: Light-independent protochlorophyllide reductase iron-sulfur ATP-binding protein (275 aa).

ATP contacts are provided by residues 12-17 and lysine 41; that span reads GIGKST. Serine 16 lines the Mg(2+) pocket. The [4Fe-4S] cluster site is built by cysteine 97 and cysteine 131. 182–183 is a binding site for ATP; the sequence is NR.

Belongs to the NifH/BchL/ChlL family. In terms of assembly, homodimer. Protochlorophyllide reductase is composed of three subunits; BchL, BchN and BchB. The cofactor is [4Fe-4S] cluster.

It carries out the reaction chlorophyllide a + oxidized 2[4Fe-4S]-[ferredoxin] + 2 ADP + 2 phosphate = protochlorophyllide a + reduced 2[4Fe-4S]-[ferredoxin] + 2 ATP + 2 H2O. It functions in the pathway porphyrin-containing compound metabolism; bacteriochlorophyll biosynthesis (light-independent). In terms of biological role, component of the dark-operative protochlorophyllide reductase (DPOR) that uses Mg-ATP and reduced ferredoxin to reduce ring D of protochlorophyllide (Pchlide) to form chlorophyllide a (Chlide). This reaction is light-independent. The L component serves as a unique electron donor to the NB-component of the complex, and binds Mg-ATP. The protein is Light-independent protochlorophyllide reductase iron-sulfur ATP-binding protein of Chlorobium phaeobacteroides (strain BS1).